Consider the following 206-residue polypeptide: MSKLKQGTFITFEGGEGIGKSTQCQMLYEYLKSQNIPVILTREVGGTNVAEKMREILVHTDLLPMSELLQAMAARYDHMVKKIIPALQAGNIVICDRFIDSTACYQGLELENGIELVYNLHKDLMPPLMPDLTFFIDVESSIAIERINSRNMSNKFDVRGLDFYNKIYDCFKGLSKKFPERIVTIKASDLNPEQVHELIKKHLNLI.

An ATP-binding site is contributed by 14–21; the sequence is GGEGIGKS.

The protein belongs to the thymidylate kinase family.

It catalyses the reaction dTMP + ATP = dTDP + ADP. Functionally, phosphorylation of dTMP to form dTDP in both de novo and salvage pathways of dTTP synthesis. The protein is Thymidylate kinase of Rickettsia bellii (strain OSU 85-389).